Consider the following 507-residue polypeptide: MPDKRALSDSYEQLPLKRAATVSSNTNDISDERIIATLRHPRACVSASGSPFSASPSFQQPVPLCSFSFDEHRKQWHDDRCKRFYRGPPPYNQRHPRQHGARAVFGADLNYGLERFVRRDQDVPEHLDALVAALQHRTEAAVSDEERDQVDQERRKADVVTWRGIITKICTAYEQTAEARFSDPLELNAMMLDDTLYLEEYTCKSARAQKQNKEDDPKMLRMGYYGYSFESYCTVDTELQTREPFRPIPSKESSLPHPAGWSGDVNTNVQWCQVVKTKLGNNRLVIGGEVDAVERNPKTGREELVELKTSMQMTWAQHNPSKAALDQERFEKKLLKFFLQSYLLGIGKIVVGFRDHHGILTTHQDFETLRIPRMVRAGQPIAGRFDHTGKPVIRQQSVWEPKDGLGFGDQILSFIRQTILSRSIQATPTEQISAGAGANTPNPTAAVGQVHHPVYRVTFRSPFDQVEMRCLSEQEIYEEVQDSGGSGARVGFLPRSFYDFVQRRAGS.

Position 73 (arginine 73) interacts with substrate. Glutamate 230 serves as a coordination point for a divalent metal cation. The substrate site is built by cysteine 272 and glutamate 289. 3 residues coordinate a divalent metal cation: aspartate 291, glutamate 306, and leucine 307. Lysine 308 and glutamine 340 together coordinate substrate.

This sequence belongs to the DXO/Dom3Z family. Interacts with RAT1; the interaction is direct, stabilizes RAT1 protein structure and stimulates its exoribonuclease activity. The interaction also stimulates RAI1 pyrophosphohydrolase activity, probably by recruiting it to mRNA substrates. The cofactor is a divalent metal cation.

It localises to the nucleus. The enzyme catalyses a 5'-end NAD(+)-phospho-ribonucleoside in mRNA + H2O = a 5'-end phospho-ribonucleoside in mRNA + NAD(+) + H(+). The catalysed reaction is a 5'-end (N(7)-methyl 5'-triphosphoguanosine)-ribonucleoside-ribonucleotide in mRNA + H2O = a (N(7)-methyl 5'-triphosphoguanosine)-nucleoside + a 5'-end phospho-ribonucleoside in mRNA + H(+). It catalyses the reaction a 5'-end triphospho-ribonucleoside in mRNA + H2O = a 5'-end phospho-ribonucleoside in mRNA + diphosphate + H(+). Decapping enzyme for NAD-capped RNAs: specifically hydrolyzes the nicotinamide adenine dinucleotide (NAD) cap from a subset of RNAs by removing the entire NAD moiety from the 5'-end of an NAD-capped RNA. The NAD-cap is present at the 5'-end of some RNAs and snoRNAs. In contrast to the canonical 5'-end N7 methylguanosine (m7G) cap, the NAD cap promotes mRNA decay. Also acts as a non-canonical decapping enzyme that removes the entire cap structure of m7G capped or incompletely capped RNAs. Has decapping activity toward incomplete 5'-end m7G cap mRNAs such as unmethylated 5'-end-capped RNA (cap0), while it has no activity toward 2'-O-ribose methylated m7G cap (cap1). Also possesses RNA 5'-pyrophosphohydrolase activity by hydrolyzing the 5'-end triphosphate to release pyrophosphates. Stimulates exoribonuclease activity of Rat1, allowing it to degrade RNAs with stable secondary structure more effectively. The chain is Decapping nuclease RAI1 (RAI1) from Mycosarcoma maydis (Corn smut fungus).